The following is a 246-amino-acid chain: Nuclear transcription factor Y subunit C-2 (246 aa).

Disordered regions lie at residues Met-1 to His-35 and Gln-205 to Glu-246. Residues Ala-9–Val-21 are compositionally biased toward low complexity.

The protein belongs to the NFYC/HAP5 subunit family. As to quaternary structure, heterotrimeric transcription factor composed of three components, NF-YA, NF-YB and NF-YC. NF-YB and NF-YC must interact and dimerize for NF-YA association and DNA binding. Interacts with NFYB8, NFYB10 and HD5/NFYB11.

The protein localises to the nucleus. It localises to the cytoplasm. Probable transcription factor involved in the regulation of flowering time under long day (LD) conditions. Functions as a repressor of flowering, independently of HD1 and GHD7. Controls flowering time by negatively regulating the expression of EHD1 and HD3A. Component of the NF-Y/HAP transcription factor complex. In Oryza sativa subsp. japonica (Rice), this protein is Nuclear transcription factor Y subunit C-2.